The chain runs to 129 residues: ATP synthase epsilon chain (129 aa).

Belongs to the ATPase epsilon chain family. F-type ATPases have 2 components, CF(1) - the catalytic core - and CF(0) - the membrane proton channel. CF(1) has five subunits: alpha(3), beta(3), gamma(1), delta(1), epsilon(1). CF(0) has three main subunits: a, b and c.

It is found in the cell inner membrane. Functionally, produces ATP from ADP in the presence of a proton gradient across the membrane. The protein is ATP synthase epsilon chain of Campylobacter concisus (strain 13826).